The primary structure comprises 120 residues: NAD(P)H-quinone oxidoreductase subunit 3, chloroplastic (120 aa).

The next 3 helical transmembrane spans lie at 9 to 29, 64 to 84, and 88 to 108; these read IFWAFLIISSFIPILAFLISG, MFALIFVVFDVETVFLYPWAM, and VLGVSVFIEAFIFVLILIVGS.

It belongs to the complex I subunit 3 family. In terms of assembly, NDH is composed of at least 16 different subunits, 5 of which are encoded in the nucleus.

Its subcellular location is the plastid. The protein resides in the chloroplast thylakoid membrane. The catalysed reaction is a plastoquinone + NADH + (n+1) H(+)(in) = a plastoquinol + NAD(+) + n H(+)(out). The enzyme catalyses a plastoquinone + NADPH + (n+1) H(+)(in) = a plastoquinol + NADP(+) + n H(+)(out). NDH shuttles electrons from NAD(P)H:plastoquinone, via FMN and iron-sulfur (Fe-S) centers, to quinones in the photosynthetic chain and possibly in a chloroplast respiratory chain. The immediate electron acceptor for the enzyme in this species is believed to be plastoquinone. Couples the redox reaction to proton translocation, and thus conserves the redox energy in a proton gradient. The polypeptide is NAD(P)H-quinone oxidoreductase subunit 3, chloroplastic (Glycine max (Soybean)).